The following is a 95-amino-acid chain: Small ribosomal subunit protein bS18 (95 aa).

It belongs to the bacterial ribosomal protein bS18 family. In terms of assembly, part of the 30S ribosomal subunit. Forms a tight heterodimer with protein bS6.

Functionally, binds as a heterodimer with protein bS6 to the central domain of the 16S rRNA, where it helps stabilize the platform of the 30S subunit. This is Small ribosomal subunit protein bS18 from Ehrlichia ruminantium (strain Gardel).